A 343-amino-acid polypeptide reads, in one-letter code: F17b-G fimbrial adhesin (343 aa).

A signal peptide spans 1 to 22; sequence MTNFYKVFLAVFILVCCNISHA. The receptor-binding lectin domain stretch occupies residues 23–199; sequence VVSFIGSTEN…LNPFTLNDTV (177 aa). Residues 65–66, 110–111, and 138–141 contribute to the a carbohydrate site; these read AN, DT, and STQG. Cys-75 and Cys-132 are joined by a disulfide. Residues 200–343 form a fimbrillin-binding domain region; that stretch reads TSCRLLTPSA…GISTFTFSYQ (144 aa). Residues 287-307 form a disordered region; that stretch reads LKFGPDSPVKGNENQWQLSTG. A compositionally biased stretch (polar residues) spans 298–307; sequence NENQWQLSTG.

The protein belongs to the fimbrial protein family.

The protein localises to the fimbrium. In terms of biological role, essential fimbrial adhesion factor that mediates binding to N-acetylglucosamine-containing receptors in the host intestinal microvilli, leading to colonization of the intestinal tissue, and diarrhea or septicemia. Also confers adhesiveness to laminin and basement membranes. The chain is F17b-G fimbrial adhesin (f17bG) from Escherichia coli.